The following is a 378-amino-acid chain: 3-dehydroquinate synthase (378 aa).

NAD(+) contacts are provided by residues 115–119, 139–140, Lys152, and Lys161; these read GVVGD and TS. 3 residues coordinate Zn(2+): Glu194, His256, and His275.

This sequence belongs to the sugar phosphate cyclases superfamily. Dehydroquinate synthase family. Requires Co(2+) as cofactor. Zn(2+) is required as a cofactor. NAD(+) serves as cofactor.

It localises to the cytoplasm. The enzyme catalyses 7-phospho-2-dehydro-3-deoxy-D-arabino-heptonate = 3-dehydroquinate + phosphate. The protein operates within metabolic intermediate biosynthesis; chorismate biosynthesis; chorismate from D-erythrose 4-phosphate and phosphoenolpyruvate: step 2/7. In terms of biological role, catalyzes the conversion of 3-deoxy-D-arabino-heptulosonate 7-phosphate (DAHP) to dehydroquinate (DHQ). In Brucella abortus biovar 1 (strain 9-941), this protein is 3-dehydroquinate synthase.